A 185-amino-acid polypeptide reads, in one-letter code: DNA-directed RNA polymerase 22 kDa subunit (185 aa).

Belongs to the poxviridae DNA-directed RNA polymerase 22 kDa subunit family. In terms of assembly, the DNA-dependent RNA polymerase used for intermediate and late genes expression consists of eight subunits Rpo30/OPG66, Rpo7/OPG90, Rpo22/OPG103, Rpo147/OPG105, Rpo18/OPG119, Rpo19/OPG131, Rpo132/OPG151 and Rpo35/OPG156. The same holoenzyme, with the addition of the transcription-specificity factor OPG109, is used for early gene expression.

It is found in the virion. It carries out the reaction RNA(n) + a ribonucleoside 5'-triphosphate = RNA(n+1) + diphosphate. Its function is as follows. Part of the DNA-dependent RNA polymerase which catalyzes the transcription of viral DNA into RNA using the four ribonucleoside triphosphates as substrates. Responsible for the transcription of early, intermediate and late genes. DNA-dependent RNA polymerase associates with the early transcription factor (ETF), itself composed of OPG118 and OPG133, thereby allowing the early genes transcription. Late transcription, and probably also intermediate transcription, require newly synthesized RNA polymerase. The protein is DNA-directed RNA polymerase 22 kDa subunit (OPG103) of Variola virus (isolate Human/India/Ind3/1967) (VARV).